The sequence spans 343 residues: MSNYQFTKPAGPFRLFELAKISGATLYEGKGETFTVSGLAKLSEATSNDLVMLHQKKYVKELKHTAARVCIIGPDYVKYAPDSMYLLVHPNPYKAFALIAQAFYPSEKPPGFIATSAMIESSAIIGVDCFIAHGAYIGNQVKIGNRCKIGVNTYIGDTVTIGDDCLIEDNVSIRHAVIGNNVVIYSGARIGQDGFGFASDANGHYKIPHAGGVIIGNDVEIGANTCIDRGSLDNTVIEDWCRLDNLVQIGHNVKIGKGSVLVAQVGIAGSTELGEHVTLAGQVGVIGHLKIGKGATVLASAKVYKNVKSGDRVGGHPAVSISDWQKQIRFLKTAIKSKKSPKS.

Catalysis depends on histidine 251, which acts as the Proton acceptor.

Belongs to the transferase hexapeptide repeat family. LpxD subfamily. As to quaternary structure, homotrimer.

The enzyme catalyses a UDP-3-O-[(3R)-3-hydroxyacyl]-alpha-D-glucosamine + a (3R)-hydroxyacyl-[ACP] = a UDP-2-N,3-O-bis[(3R)-3-hydroxyacyl]-alpha-D-glucosamine + holo-[ACP] + H(+). The protein operates within bacterial outer membrane biogenesis; LPS lipid A biosynthesis. Functionally, catalyzes the N-acylation of UDP-3-O-acylglucosamine using 3-hydroxyacyl-ACP as the acyl donor. Is involved in the biosynthesis of lipid A, a phosphorylated glycolipid that anchors the lipopolysaccharide to the outer membrane of the cell. In Legionella pneumophila subsp. pneumophila (strain Philadelphia 1 / ATCC 33152 / DSM 7513), this protein is UDP-3-O-acylglucosamine N-acyltransferase 2.